The chain runs to 884 residues: E3 ubiquitin-protein ligase BRE1-like 1 (884 aa).

The segment at 1–37 (MGSTGEPDRKRRLSSSVAPGGGAPVSPAKRLAVAPTS) is disordered. Positions 49 to 86 (YKNQKLSEQLEAHKFEYRALENKFAGLKEKQRTHNETL) form a coiled coil. The tract at residues 107 to 127 (KSGSPNSSPGSGHNNVQKDGT) is disordered. A compositionally biased stretch (low complexity) spans 108–121 (SGSPNSSPGSGHNN). Coiled coils occupy residues 216–541 (LNNV…ELKL), 580–663 (SKLE…LQQI), 696–762 (RNLQ…QSLD), and 789–827 (KKRI…KEYR). The RING-type zinc finger occupies 832-871 (CGICHDRQKEVVITKCYHLFCNQCIQKSLGNRQRRCPSCS).

This sequence belongs to the BRE1 family.

The protein localises to the nucleus. It catalyses the reaction S-ubiquitinyl-[E2 ubiquitin-conjugating enzyme]-L-cysteine + [acceptor protein]-L-lysine = [E2 ubiquitin-conjugating enzyme]-L-cysteine + N(6)-ubiquitinyl-[acceptor protein]-L-lysine.. It participates in protein modification; protein ubiquitination. E3 ubiquitin-protein ligase that monoubiquitinates H2B to form H2BK143ub1. H2BK143ub1 gives a specific tag for epigenetic transcriptional activation and is also prerequisite for H3K4me and maybe H3K79me. It thereby plays a central role in histone code and gene regulation. Forms a ubiquitin ligase complex in cooperation with the E2 enzyme UBC2/RAD6. The chain is E3 ubiquitin-protein ligase BRE1-like 1 (BRE1A) from Oryza sativa subsp. indica (Rice).